The sequence spans 608 residues: Elongation factor 4 (608 aa).

The 183-residue stretch at 11-193 (KKIRNFSIIA…QIVEKVPEPS (183 aa)) folds into the tr-type G domain. Residues 23–28 (DHGKST) and 140–143 (NKID) contribute to the GTP site.

It belongs to the TRAFAC class translation factor GTPase superfamily. Classic translation factor GTPase family. LepA subfamily.

The protein localises to the cell membrane. The catalysed reaction is GTP + H2O = GDP + phosphate + H(+). In terms of biological role, required for accurate and efficient protein synthesis under certain stress conditions. May act as a fidelity factor of the translation reaction, by catalyzing a one-codon backward translocation of tRNAs on improperly translocated ribosomes. Back-translocation proceeds from a post-translocation (POST) complex to a pre-translocation (PRE) complex, thus giving elongation factor G a second chance to translocate the tRNAs correctly. Binds to ribosomes in a GTP-dependent manner. The protein is Elongation factor 4 of Listeria monocytogenes serotype 4b (strain CLIP80459).